The following is a 504-amino-acid chain: Alpha,alpha-trehalose-phosphate synthase [UDP-forming] (504 aa).

Residues Y97 and D151 each coordinate D-glucose 6-phosphate. UDP is bound by residues R287 and K292. Residues R287 and K292 each contribute to the UDP-alpha-D-glucose site. R325 contributes to the D-glucose 6-phosphate binding site. Residue 386 to 394 (DGMNLVSYE) participates in UDP-alpha-D-glucose binding. 390–394 (LVSYE) lines the UDP pocket. The interval 482–504 (AGKLPTKETPVNGETSKLETSSQ) is disordered. Residues 493–504 (NGETSKLETSSQ) show a composition bias toward polar residues.

This sequence belongs to the glycosyltransferase 20 family.

It catalyses the reaction D-glucose 6-phosphate + UDP-alpha-D-glucose = alpha,alpha-trehalose 6-phosphate + UDP + H(+). The protein operates within carbohydrate biosynthesis. In terms of biological role, synthase catalytic subunit of the trehalose synthase complex that catalyzes the production of trehalose from glucose-6-phosphate and UDP-alpha-D-glucose in a two step process. The protein is Alpha,alpha-trehalose-phosphate synthase [UDP-forming] (tpsA) of Emericella nidulans (strain FGSC A4 / ATCC 38163 / CBS 112.46 / NRRL 194 / M139) (Aspergillus nidulans).